The following is a 114-amino-acid chain: Iron-sulfur cluster insertion protein ErpA (114 aa).

Iron-sulfur cluster-binding residues include Cys-42, Cys-106, and Cys-108.

The protein belongs to the HesB/IscA family. Homodimer. Iron-sulfur cluster is required as a cofactor.

In terms of biological role, required for insertion of 4Fe-4S clusters for at least IspG. In Salmonella typhi, this protein is Iron-sulfur cluster insertion protein ErpA.